Reading from the N-terminus, the 116-residue chain is NADH-quinone oxidoreductase subunit A (116 aa).

3 consecutive transmembrane segments (helical) span residues 3–23 (FTLLVVVLLTAIAFVGVVIAL), 61–81 (FAILFLMFDVETVFLFPWAVI), and 88–108 (QGLISILFFLVVLVLGLAYAW).

The protein belongs to the complex I subunit 3 family. NDH-1 is composed of 14 different subunits. Subunits NuoA, H, J, K, L, M, N constitute the membrane sector of the complex.

It localises to the cell inner membrane. It catalyses the reaction a quinone + NADH + 5 H(+)(in) = a quinol + NAD(+) + 4 H(+)(out). Functionally, NDH-1 shuttles electrons from NADH, via FMN and iron-sulfur (Fe-S) centers, to quinones in the respiratory chain. The immediate electron acceptor for the enzyme in this species is believed to be a menaquinone. Couples the redox reaction to proton translocation (for every two electrons transferred, four hydrogen ions are translocated across the cytoplasmic membrane), and thus conserves the redox energy in a proton gradient. The protein is NADH-quinone oxidoreductase subunit A of Bacteroides fragilis (strain ATCC 25285 / DSM 2151 / CCUG 4856 / JCM 11019 / LMG 10263 / NCTC 9343 / Onslow / VPI 2553 / EN-2).